The following is a 147-amino-acid chain: Heavy metal-associated isoprenylated plant protein 27 (147 aa).

Residues 18–82 (FQKVEIKVKM…VMHRTGKKAE (65 aa)) form the HMA domain. Positions 29 and 32 each coordinate a metal cation. Cysteine 144 is subject to Cysteine methyl ester. The S-farnesyl cysteine moiety is linked to residue cysteine 144. A propeptide spans 145-147 (TIM) (removed in mature form).

The protein belongs to the HIPP family. Interacts with UBP16. Interacts with ZHD11/HB29.

Its subcellular location is the membrane. In terms of biological role, heavy-metal-binding protein. Binds cadmium. May be involved in cadmium transport and play a role in cadmium detoxification. The polypeptide is Heavy metal-associated isoprenylated plant protein 27 (Arabidopsis thaliana (Mouse-ear cress)).